A 326-amino-acid polypeptide reads, in one-letter code: Putative HTH-type transcriptional regulatory protein MmarC7_1702 (326 aa).

Residues 128-183 (LRETREKLKISVGELAEISRVSRKTIYKYEQNEANPSAEVAIKIEEYLDVPLIKGI) form the HTH cro/C1-type domain. Residues 139-158 (VGELAEISRVSRKTIYKYEQ) constitute a DNA-binding region (H-T-H motif).

This chain is Putative HTH-type transcriptional regulatory protein MmarC7_1702, found in Methanococcus maripaludis (strain C7 / ATCC BAA-1331).